Here is a 420-residue protein sequence, read N- to C-terminus: Melatonin receptor type 1C (420 aa).

At 1–34 the chain is on the extracellular side; sequence MMEVNSTCLDCRTPGTIRTEQDAQDSASQGLTSA. N5 carries an N-linked (GlcNAc...) asparagine glycan. A helical transmembrane segment spans residues 35-55; it reads LAVVLIFTIVVDVLGNILVIL. Residues 56-73 are Cytoplasmic-facing; that stretch reads SVLRNKKLQNAGNLFVVS. A helical transmembrane segment spans residues 74–94; it reads LSIADLVVAVYPYPVILIAIF. The Extracellular segment spans residues 95–106; that stretch reads QNGWTLGNIHCQ. C105 and C182 form a disulfide bridge. The chain crosses the membrane as a helical span at residues 107–127; the sequence is ISGFLMGLSVIGSVFNITAIA. Residues 128-152 lie on the Cytoplasmic side of the membrane; it reads INRYCYICHSLRYDKLYNQRSTWCY. The helical transmembrane segment at 153 to 173 threads the bilayer; it reads LGLTWILTIIAIVPNFFVGSL. Topologically, residues 174-192 are extracellular; the sequence is QYDPRIFSCTFAQTVSSSY. Residues 193–213 traverse the membrane as a helical segment; it reads TITVVVVHFIVPLSVVTFCYL. At 214-245 the chain is on the cytoplasmic side; sequence RIWVLVIQVKHRVRQDFKQKLTQTDLRNFLTM. A helical membrane pass occupies residues 246 to 266; sequence FVVFVLFAVCWAPLNFIGLAV. The Extracellular portion of the chain corresponds to 267–279; sequence AINPFHVAPKIPE. The helical transmembrane segment at 280–303 threads the bilayer; sequence WLFVLSYFMAYFNSCLNAVIYGVL. Topologically, residues 304–420 are cytoplasmic; it reads NQNFRKEYKR…ELCKDGISQR (117 aa).

This sequence belongs to the G-protein coupled receptor 1 family. Moderately expressed in dermal melanophores.

The protein resides in the cell membrane. In terms of biological role, high affinity receptor for melatonin. Likely to mediate the potent effects of melatonin on pigment aggregation in melanophores. The activity of this receptor is mediated by pertussis toxin sensitive G proteins that inhibit adenylate cyclase activity. In Xenopus laevis (African clawed frog), this protein is Melatonin receptor type 1C (mtnr1c).